Reading from the N-terminus, the 796-residue chain is RalBP1-associated Eps domain-containing protein 1 (796 aa).

Positions 10–113 (EQKYYSDLFS…SKNEQESRHA (104 aa)) constitute an EH 1 domain. Residues 105–237 (KNEQESRHAA…ENWVSFADTP (133 aa)) form a disordered region. Polar residues predominate over residues 115-126 (SYSSDSENQGSY). Residues Ser-143, Ser-145, Ser-162, Ser-166, and Ser-170 each carry the phosphoserine modification. The segment covering 145-156 (SHDTVQPRTSAD) has biased composition (polar residues). Thr-173 carries the phosphothreonine modification. Residues Ser-272 and Ser-273 each carry the phosphoserine modification. The region spanning 285–374 (QRQYYVNQFK…ESLMPKLIDL (90 aa)) is the EH 2 domain. Tyr-288 bears the Phosphotyrosine mark. Ser-307 is modified (phosphoserine). The 36-residue stretch at 318–353 (LPILELSHIWELSDFDKDGALTLDEFCAAFHLVVAR) folds into the EF-hand domain. Ca(2+)-binding residues include Asp-331, Asp-333, Asp-335, and Glu-342. A disordered region spans residues 377 to 433 (SADVGDQPGEVGYSGSPAEAPPSKSPSMPSLNQTWPELNQSSEQWETFSERSSSSQT). Polar residues predominate over residues 407–433 (LNQTWPELNQSSEQWETFSERSSSSQT). A phosphoserine mark is found at Ser-475, Ser-482, Ser-489, and Ser-540. Polar residues predominate over residues 506–543 (GNTVADGYSSSDSFTSDPEQIGSNVTRQRSHSGTSPDN). 2 disordered regions span residues 506-624 (GNTV…IPEQ) and 638-725 (ASNV…QKTG). Phosphothreonine is present on Thr-544. Over residues 544 to 554 (TAPPPPPPRPQ) the composition is skewed to pro residues. Ser-562 is modified (phosphoserine). Over residues 563–574 (LDMNRTFTVTTG) the composition is skewed to polar residues. Positions 575–584 (QQQAGVVAHP) are enriched in low complexity. Residues 585–596 (PAVPPRPQPSQA) are compositionally biased toward pro residues. Residues 612–623 (THTSTSPQQIPE) are compositionally biased toward polar residues. Positions 652–796 (HPEVLPAEKA…LEQLRPFSHL (145 aa)) are interaction with RALBP1. 2 stretches are compositionally biased toward basic and acidic residues: residues 671–681 (AKTDSKTEEKT) and 708–722 (KSED…EHTQ). A phosphoserine mark is found at Ser-709 and Ser-740. Residues 751–791 (SIRRNKETNTVLARLNSELQQQLKDVLEERISLEVQLEQLR) adopt a coiled-coil conformation.

In terms of assembly, homodimer (Potential). Interacts with RAB11FIP2. Interacts with RALBP1, CRK and GRB2. Binding to RALBP1 does not affect its Ral-binding activity. Forms a complex with the SH3 domains of CRK and GRB2 which may link it to an EGF-responsive tyrosine kinase. Interacts with AMPH, ITSN1 (via SH3 domains) and SGIP1; may be involved in clathrin-mediated endocytosis. Post-translationally, EGF stimulates phosphorylation on Tyr-residues. In terms of tissue distribution, widely expressed with highest levels in heart and testis.

The protein resides in the membrane. The protein localises to the clathrin-coated pit. In terms of biological role, may coordinate the cellular actions of activated EGF receptors and Ral-GTPases. The protein is RalBP1-associated Eps domain-containing protein 1 (REPS1) of Homo sapiens (Human).